We begin with the raw amino-acid sequence, 351 residues long: 3-dehydroquinate synthase (351 aa).

NAD(+) contacts are provided by residues 60–65 (DGEEYK), 94–98 (GVISD), 118–119 (TT), Lys131, Lys140, and 158–161 (FLKT). Positions 173, 239, and 256 each coordinate Zn(2+).

Belongs to the sugar phosphate cyclases superfamily. Dehydroquinate synthase family. It depends on Co(2+) as a cofactor. The cofactor is Zn(2+). NAD(+) is required as a cofactor.

The protein localises to the cytoplasm. It carries out the reaction 7-phospho-2-dehydro-3-deoxy-D-arabino-heptonate = 3-dehydroquinate + phosphate. Its pathway is metabolic intermediate biosynthesis; chorismate biosynthesis; chorismate from D-erythrose 4-phosphate and phosphoenolpyruvate: step 2/7. In terms of biological role, catalyzes the conversion of 3-deoxy-D-arabino-heptulosonate 7-phosphate (DAHP) to dehydroquinate (DHQ). In Campylobacter jejuni subsp. doylei (strain ATCC BAA-1458 / RM4099 / 269.97), this protein is 3-dehydroquinate synthase.